Reading from the N-terminus, the 291-residue chain is ATP synthase gamma chain (291 aa).

It belongs to the ATPase gamma chain family. In terms of assembly, F-type ATPases have 2 components, CF(1) - the catalytic core - and CF(0) - the membrane proton channel. CF(1) has five subunits: alpha(3), beta(3), gamma(1), delta(1), epsilon(1). CF(0) has three main subunits: a, b and c.

The protein localises to the cell inner membrane. Its function is as follows. Produces ATP from ADP in the presence of a proton gradient across the membrane. The gamma chain is believed to be important in regulating ATPase activity and the flow of protons through the CF(0) complex. The sequence is that of ATP synthase gamma chain from Variovorax paradoxus (strain S110).